The sequence spans 295 residues: Phosphoribosylaminoimidazole-succinocarboxamide synthase (295 aa).

Belongs to the SAICAR synthetase family.

The catalysed reaction is 5-amino-1-(5-phospho-D-ribosyl)imidazole-4-carboxylate + L-aspartate + ATP = (2S)-2-[5-amino-1-(5-phospho-beta-D-ribosyl)imidazole-4-carboxamido]succinate + ADP + phosphate + 2 H(+). The protein operates within purine metabolism; IMP biosynthesis via de novo pathway; 5-amino-1-(5-phospho-D-ribosyl)imidazole-4-carboxamide from 5-amino-1-(5-phospho-D-ribosyl)imidazole-4-carboxylate: step 1/2. The sequence is that of Phosphoribosylaminoimidazole-succinocarboxamide synthase from Halorhodospira halophila (strain DSM 244 / SL1) (Ectothiorhodospira halophila (strain DSM 244 / SL1)).